Here is a 155-residue protein sequence, read N- to C-terminus: Large ribosomal subunit protein uL22 (155 aa).

Belongs to the universal ribosomal protein uL22 family. As to quaternary structure, part of the 50S ribosomal subunit. Contacts the macrolide antibiotic tylosin in the polypeptide exit tunnel.

Functionally, this protein binds specifically to 23S rRNA. It makes multiple contacts with different domains of the 23S rRNA in the assembled 50S subunit and ribosome. Contacts all 6 domains of the 23S rRNA, helping stabilize their relative orientation. An extended beta-hairpin in the C-terminus forms part of the polypeptide exit tunnel, in which it helps forms a bend with protein L4, while most of the rest of the protein is located at the polypeptide exit tunnel on the outside of the subunit. The sequence is that of Large ribosomal subunit protein uL22 from Haloarcula marismortui (strain ATCC 43049 / DSM 3752 / JCM 8966 / VKM B-1809) (Halobacterium marismortui).